Reading from the N-terminus, the 236-residue chain is tRNA (guanine-N(7)-)-methyltransferase (236 aa).

Positions 35, 60, 87, and 113 each coordinate S-adenosyl-L-methionine. Residue aspartate 113 is part of the active site. Substrate is bound by residues lysine 117 and aspartate 149.

It belongs to the class I-like SAM-binding methyltransferase superfamily. TrmB family.

The enzyme catalyses guanosine(46) in tRNA + S-adenosyl-L-methionine = N(7)-methylguanosine(46) in tRNA + S-adenosyl-L-homocysteine. The protein operates within tRNA modification; N(7)-methylguanine-tRNA biosynthesis. Its function is as follows. Catalyzes the formation of N(7)-methylguanine at position 46 (m7G46) in tRNA. This chain is tRNA (guanine-N(7)-)-methyltransferase, found in Prochlorococcus marinus (strain MIT 9303).